The primary structure comprises 1462 residues: MGAKNSVLRGKKADELEKIRLRPGGKKKYRLKHIVWAANELDRFGLTESLLESKEGCQKIISVLEPLVPTGSENLKSLYNTTCVIWCLHAEEKVKDTEEAKRIVGRHLVAETETAEKMPNISRPTAPPSGKGGNFPVQQIGGNYVHLPLSPRTLNAWVKLVEEKKFGAEVVPGFQALSEGCTPYDINQMLNCVGDHQAAMQIIREIINEEAADWDVQHPIPGPLPAGQLRDPRGSDIAGTTSTVEEQIEWMYRQENPVPVGNIYRRWIQIGLQKCVRMYNPTNILDIKQGPKESFQSYVDRFYKSLRAEQTDAAVKNWMTQTLLVQSNPDCKLVLKGLGMNPTLEEMLTACQGIGGPGQKARLMAEALKEAMRPAPIPFAAAQQKRAIKCWNCGKEGHSARQCRAPRRQGCWKCGKSGHIMANCPDRQAGFLRAWTMGKEAPQLPRGPKFAGANTNSTPNGSSSGPTGEVHAAREKTERAETKTIQRSDRGLAASRARRDTTQRDDRGLAAPQFSLWKRPVVTAYIEDQPVEVLLDTGADDSIVAGIELGSNYSPKIVGGIGGFINTKEYKDVEIRVLNKKVRATIMTGDTPINIFGRNILTALGMSLNLPVAKIEPVKVTLKPGKDGPKQRQWPLTREKIEALREICEKMEREGQLEEAPPTNPYNTPTFAIKKKDKNKWRMLIDFRELNKVTQDFTEVQLGIPHPAGLAKKRRITVLDVGDAYFSIPLYEDFRQYTAFTLPSVNNAEPGKRYIYKVLPQGWKGSPAIFQYTMRQVLEPFRKANPDVIIVQYMDDILIASDRTDLEHDKVVLQLKELLNGLGFSTPDEKFQKDPPYQWMGYELWPTKWKLQKIQLPQKEVWTVNDIQKLVGVLNWAAQIYPGIKTKHLCKLIRGKMTPTEEVQWTELAEAELEENKIILSQEQEGHYYQEEKELEATVQKDQDNQWTYKVHQGEKILKVGKYAKIKNTHTNGVRLLAQVVQKIGKEALVIWGRIPKFHLPVERETWEQWWDNYWQVTWIPDWDFVSTPPLVRLAFNLVKDPIPGAETFYTDGSCNRQSKEGKAGYITDRGKDKVRILEQTTNQQAELEAFAMAVTDSGPKVNIVVDSQYVMGIVTGQPAESESRIVNKIIEEMIKKEAIYVAWVPAHKGIGGNQEIDHLVSQGIRQVLFLERIEPAQEEHGKYHSNVKELAHKFGLPNLVARQIVNTCAQCQQKGEAIHGQVNAELGTWQMDCTHLEGKIIIVAVHVASGFIEAEVIPQESGRQTALFLLKLASRWPITHLHTDNGANFTSQEVKMVAWWVGIEQSFGVPYNPQSQGVVEAMNHHLKNQIERIREQANTMETIVLMAVHCMNFKRRGGIGDMTPVERLVNMITTEQEIQFLQAKNSKLKNFRVYFREGRNQLWQGPGELLWKGDGAVIVKVGTDIKVIPRRKAKIIRDYGPRQEMDSGSHLEGAREDGEMA.

Gly2 carries the N-myristoyl glycine; by host lipid modification. An interaction with Gp41 region spans residues Val7–Leu31. The short motif at Leu16 to Arg22 is the Nuclear export signal element. The Nuclear localization signal signature appears at Lys26–Lys32. The interaction with human PPIA/CYPA and NUP153 stretch occupies residues Asn191–Gln228. Residues Tyr279–Met364 form a dimerization/Multimerization of capsid protein p24 region. 2 consecutive CCHC-type zinc fingers follow at residues Ile388–Ala405 and Gln409–Asp426. The disordered stretch occupies residues Ala441–Arg507. Residues Asn454–Gly468 are compositionally biased toward low complexity. 2 stretches are compositionally biased toward basic and acidic residues: residues His471–Arg490 and Ala497–Arg507. A dimerization of protease region spans residues Pro512 to Leu516. A Peptidase A2 domain is found at Val531–Ile600. Asp536 functions as the For protease activity; shared with dimeric partner in the catalytic mechanism. 2 dimerization of protease regions span residues Gly560–Asn566 and Asn599–Pro611. The region spanning Glu654–Leu844 is the Reverse transcriptase domain. 3 residues coordinate Mg(2+): Asp720, Asp795, and Asp796. An RT 'primer grip' region spans residues Tyr837–Trp845. A Tryptophan repeat motif motif is present at residues Trp1007–Trp1023. The 124-residue stretch at Ile1043–Arg1166 folds into the RNase H type-1 domain. Positions 1052, 1087, 1107, and 1158 each coordinate Mg(2+). The Integrase-type zinc finger occupies Glu1172–Gln1213. The Zn(2+) site is built by His1181, His1185, Cys1209, and Cys1212. The region spanning Gln1222–Ile1373 is the Integrase catalytic domain. Mg(2+) contacts are provided by Asp1233, Asp1285, and Glu1321. A DNA-binding region (integrase-type) is located at residues Phe1392–Asp1439. A disordered region spans residues Arg1443 to Ala1462.

In terms of assembly, homotrimer; further assembles as hexamers of trimers. Interacts with gp41 (via C-terminus). Interacts with host CALM1; this interaction induces a conformational change in the Matrix protein, triggering exposure of the myristate group. Interacts with host AP3D1; this interaction allows the polyprotein trafficking to multivesicular bodies during virus assembly. Part of the pre-integration complex (PIC) which is composed of viral genome, matrix protein, Vpr and integrase. Homodimer; the homodimer further multimerizes as homohexamers or homopentamers. Interacts with human PPIA/CYPA. Interacts with human NUP153. Interacts with host PDZD8; this interaction stabilizes the capsid. Interacts with monkey TRIM5; this interaction destabilizes the capsid. As to quaternary structure, homodimer, whose active site consists of two apposed aspartic acid residues. In terms of assembly, heterodimer of p66 RT and p51 RT (RT p66/p51). Heterodimerization of RT is essential for DNA polymerase activity. The overall folding of the subdomains is similar in p66 RT and p51 RT but the spatial arrangements of the subdomains are dramatically different. Homotetramer; may further associate as a homohexadecamer. Part of the pre-integration complex (PIC) which is composed of viral genome, matrix protein, Vpr and integrase. Interacts with human SMARCB1/INI1 and human PSIP1/LEDGF isoform 1. Interacts with human KPNA3; this interaction might play a role in nuclear import of the pre-integration complex. Interacts with human NUP153; this interaction might play a role in nuclear import of the pre-integration complex. The cofactor is Mg(2+). Post-translationally, specific enzymatic cleavages by the viral protease yield mature proteins. The protease is released by autocatalytic cleavage. The polyprotein is cleaved during and after budding, this process is termed maturation. Proteolytic cleavage of p66 RT removes the RNase H domain to yield the p51 RT subunit. Nucleocapsid protein p7 might be further cleaved after virus entry.

Its subcellular location is the host cell membrane. It is found in the host endosome. The protein resides in the host multivesicular body. The protein localises to the virion membrane. It localises to the host nucleus. Its subcellular location is the host cytoplasm. It is found in the virion. The enzyme catalyses Endopeptidase for which the P1 residue is preferably hydrophobic.. The catalysed reaction is Endohydrolysis of RNA in RNA/DNA hybrids. Three different cleavage modes: 1. sequence-specific internal cleavage of RNA. Human immunodeficiency virus type 1 and Moloney murine leukemia virus enzymes prefer to cleave the RNA strand one nucleotide away from the RNA-DNA junction. 2. RNA 5'-end directed cleavage 13-19 nucleotides from the RNA end. 3. DNA 3'-end directed cleavage 15-20 nucleotides away from the primer terminus.. It catalyses the reaction 3'-end directed exonucleolytic cleavage of viral RNA-DNA hybrid.. It carries out the reaction DNA(n) + a 2'-deoxyribonucleoside 5'-triphosphate = DNA(n+1) + diphosphate. Protease: The viral protease is inhibited by many synthetic protease inhibitors (PIs), such as amprenavir, atazanavir, indinavir, loprinavir, nelfinavir, ritonavir and saquinavir. Use of protease inhibitors in tritherapy regimens permit more ambitious therapeutic strategies. Reverse transcriptase/ribonuclease H: RT can be inhibited either by nucleoside RT inhibitors (NRTIs) or by non nucleoside RT inhibitors (NNRTIs). NRTIs act as chain terminators, whereas NNRTIs inhibit DNA polymerization by binding a small hydrophobic pocket near the RT active site and inducing an allosteric change in this region. Classical NRTIs are abacavir, adefovir (PMEA), didanosine (ddI), lamivudine (3TC), stavudine (d4T), tenofovir (PMPA), zalcitabine (ddC), and zidovudine (AZT). Classical NNRTIs are atevirdine (BHAP U-87201E), delavirdine, efavirenz (DMP-266), emivirine (I-EBU), and nevirapine (BI-RG-587). The tritherapies used as a basic effective treatment of AIDS associate two NRTIs and one NNRTI. In terms of biological role, mediates, with Gag polyprotein, the essential events in virion assembly, including binding the plasma membrane, making the protein-protein interactions necessary to create spherical particles, recruiting the viral Env proteins, and packaging the genomic RNA via direct interactions with the RNA packaging sequence (Psi). Gag-Pol polyprotein may regulate its own translation, by the binding genomic RNA in the 5'-UTR. At low concentration, the polyprotein would promote translation, whereas at high concentration, the polyprotein would encapsidate genomic RNA and then shut off translation. Its function is as follows. Targets the polyprotein to the plasma membrane via a multipartite membrane-binding signal, that includes its myristoylated N-terminus. Matrix protein is part of the pre-integration complex. Implicated in the release from host cell mediated by Vpu. Binds to RNA. Functionally, forms the conical core that encapsulates the genomic RNA-nucleocapsid complex in the virion. Most core are conical, with only 7% tubular. The core is constituted by capsid protein hexamer subunits. The core is disassembled soon after virion entry. Host restriction factors such as TRIM5-alpha or TRIMCyp bind retroviral capsids and cause premature capsid disassembly, leading to blocks in reverse transcription. Capsid restriction by TRIM5 is one of the factors which restricts HIV-1 to the human species. Host PIN1 apparently facilitates the virion uncoating. On the other hand, interactions with PDZD8 or CYPA stabilize the capsid. Encapsulates and protects viral dimeric unspliced genomic RNA (gRNA). Binds these RNAs through its zinc fingers. Acts as a nucleic acid chaperone which is involved in rearangement of nucleic acid secondary structure during gRNA retrotranscription. Also facilitates template switch leading to recombination. As part of the polyprotein, participates in gRNA dimerization, packaging, tRNA incorporation and virion assembly. In terms of biological role, aspartyl protease that mediates proteolytic cleavages of Gag and Gag-Pol polyproteins during or shortly after the release of the virion from the plasma membrane. Cleavages take place as an ordered, step-wise cascade to yield mature proteins. This process is called maturation. Displays maximal activity during the budding process just prior to particle release from the cell. Also cleaves Nef and Vif, probably concomitantly with viral structural proteins on maturation of virus particles. Hydrolyzes host EIF4GI and PABP1 in order to shut off the capped cellular mRNA translation. The resulting inhibition of cellular protein synthesis serves to ensure maximal viral gene expression and to evade host immune response. Its function is as follows. Multifunctional enzyme that converts the viral RNA genome into dsDNA in the cytoplasm, shortly after virus entry into the cell. This enzyme displays a DNA polymerase activity that can copy either DNA or RNA templates, and a ribonuclease H (RNase H) activity that cleaves the RNA strand of RNA-DNA heteroduplexes in a partially processive 3' to 5' endonucleasic mode. Conversion of viral genomic RNA into dsDNA requires many steps. A tRNA(3)-Lys binds to the primer-binding site (PBS) situated at the 5'-end of the viral RNA. RT uses the 3' end of the tRNA primer to perform a short round of RNA-dependent minus-strand DNA synthesis. The reading proceeds through the U5 region and ends after the repeated (R) region which is present at both ends of viral RNA. The portion of the RNA-DNA heteroduplex is digested by the RNase H, resulting in a ssDNA product attached to the tRNA primer. This ssDNA/tRNA hybridizes with the identical R region situated at the 3' end of viral RNA. This template exchange, known as minus-strand DNA strong stop transfer, can be either intra- or intermolecular. RT uses the 3' end of this newly synthesized short ssDNA to perform the RNA-dependent minus-strand DNA synthesis of the whole template. RNase H digests the RNA template except for two polypurine tracts (PPTs) situated at the 5'-end and near the center of the genome. It is not clear if both polymerase and RNase H activities are simultaneous. RNase H probably can proceed both in a polymerase-dependent (RNA cut into small fragments by the same RT performing DNA synthesis) and a polymerase-independent mode (cleavage of remaining RNA fragments by free RTs). Secondly, RT performs DNA-directed plus-strand DNA synthesis using the PPTs that have not been removed by RNase H as primers. PPTs and tRNA primers are then removed by RNase H. The 3' and 5' ssDNA PBS regions hybridize to form a circular dsDNA intermediate. Strand displacement synthesis by RT to the PBS and PPT ends produces a blunt ended, linear dsDNA copy of the viral genome that includes long terminal repeats (LTRs) at both ends. Functionally, catalyzes viral DNA integration into the host chromosome, by performing a series of DNA cutting and joining reactions. This enzyme activity takes place after virion entry into a cell and reverse transcription of the RNA genome in dsDNA. The first step in the integration process is 3' processing. This step requires a complex comprising the viral genome, matrix protein, Vpr and integrase. This complex is called the pre-integration complex (PIC). The integrase protein removes 2 nucleotides from each 3' end of the viral DNA, leaving recessed CA OH's at the 3' ends. In the second step, the PIC enters cell nucleus. This process is mediated through integrase and Vpr proteins, and allows the virus to infect a non dividing cell. This ability to enter the nucleus is specific of lentiviruses, other retroviruses cannot and rely on cell division to access cell chromosomes. In the third step, termed strand transfer, the integrase protein joins the previously processed 3' ends to the 5' ends of strands of target cellular DNA at the site of integration. The 5'-ends are produced by integrase-catalyzed staggered cuts, 5 bp apart. A Y-shaped, gapped, recombination intermediate results, with the 5'-ends of the viral DNA strands and the 3' ends of target DNA strands remaining unjoined, flanking a gap of 5 bp. The last step is viral DNA integration into host chromosome. This involves host DNA repair synthesis in which the 5 bp gaps between the unjoined strands are filled in and then ligated. Since this process occurs at both cuts flanking the HIV genome, a 5 bp duplication of host DNA is produced at the ends of HIV-1 integration. Alternatively, Integrase may catalyze the excision of viral DNA just after strand transfer, this is termed disintegration. This is Gag-Pol polyprotein (gag-pol) from Human immunodeficiency virus type 2 subtype A (isolate SBLISY) (HIV-2).